We begin with the raw amino-acid sequence, 68 residues long: ATP synthase F(0) complex subunit 8 (68 aa).

The helical transmembrane segment at 8–24 threads the bilayer; the sequence is VWPTTITPMLLTLFLIT. At Lys54 the chain carries N6-acetyllysine; alternate. At Lys54 the chain carries N6-succinyllysine; alternate. Position 57 is an N6-acetyllysine (Lys57).

It belongs to the ATPase protein 8 family. In terms of assembly, component of the ATP synthase complex composed at least of ATP5F1A/subunit alpha, ATP5F1B/subunit beta, ATP5MC1/subunit c (homooctomer), MT-ATP6/subunit a, MT-ATP8/subunit 8, ATP5ME/subunit e, ATP5MF/subunit f, ATP5MG/subunit g, ATP5MK/subunit k, ATP5MJ/subunit j, ATP5F1C/subunit gamma, ATP5F1D/subunit delta, ATP5F1E/subunit epsilon, ATP5PF/subunit F6, ATP5PB/subunit b, ATP5PD/subunit d, ATP5PO/subunit OSCP. ATP synthase complex consists of a soluble F(1) head domain (subunits alpha(3) and beta(3)) - the catalytic core - and a membrane F(0) domain - the membrane proton channel (subunits c, a, 8, e, f, g, k and j). These two domains are linked by a central stalk (subunits gamma, delta, and epsilon) rotating inside the F1 region and a stationary peripheral stalk (subunits F6, b, d, and OSCP). Interacts with PRICKLE3.

Its subcellular location is the mitochondrion membrane. Functionally, subunit 8, of the mitochondrial membrane ATP synthase complex (F(1)F(0) ATP synthase or Complex V) that produces ATP from ADP in the presence of a proton gradient across the membrane which is generated by electron transport complexes of the respiratory chain. ATP synthase complex consist of a soluble F(1) head domain - the catalytic core - and a membrane F(1) domain - the membrane proton channel. These two domains are linked by a central stalk rotating inside the F(1) region and a stationary peripheral stalk. During catalysis, ATP synthesis in the catalytic domain of F(1) is coupled via a rotary mechanism of the central stalk subunits to proton translocation. In vivo, can only synthesize ATP although its ATP hydrolase activity can be activated artificially in vitro. Part of the complex F(0) domain. The polypeptide is ATP synthase F(0) complex subunit 8 (Pan paniscus (Pygmy chimpanzee)).